We begin with the raw amino-acid sequence, 144 residues long: Large ribosomal subunit protein uL16c (144 aa).

The protein belongs to the universal ribosomal protein uL16 family. As to quaternary structure, part of the 50S ribosomal subunit.

The protein localises to the plastid. The protein resides in the chloroplast. This Chara vulgaris (Common stonewort) protein is Large ribosomal subunit protein uL16c.